We begin with the raw amino-acid sequence, 375 residues long: F420-dependent formate dehydrogenase 2 subunit beta (375 aa).

4Fe-4S ferredoxin-type domains are found at residues 268–291 (PEPEKWDEYWSRCIKCYGCRDVCP) and 320–349 (IRLSHMSFSCINCGQCEDVCPVEIPLAKIY). 8 residues coordinate [4Fe-4S] cluster: cysteine 280, cysteine 283, cysteine 286, cysteine 290, cysteine 329, cysteine 332, cysteine 335, and cysteine 339.

This sequence belongs to the FrhB family. In terms of assembly, dimer of an alpha (FdhA2) and a beta (FdhB2) subunit. Requires [4Fe-4S] cluster as cofactor. FAD is required as a cofactor. The cofactor is Zn(2+).

The catalysed reaction is oxidized coenzyme F420-(gamma-L-Glu)(n) + formate + 2 H(+) = reduced coenzyme F420-(gamma-L-Glu)(n) + CO2. Its function is as follows. Catalyzes the oxidation of formate to carbon dioxide, with coenzyme F420 as the electron acceptor. In vitro can also use methyl viologen as electron acceptor. The sequence is that of F420-dependent formate dehydrogenase 2 subunit beta from Methanococcus maripaludis (strain DSM 14266 / JCM 13030 / NBRC 101832 / S2 / LL).